Reading from the N-terminus, the 125-residue chain is Large ribosomal subunit protein bL17 (125 aa).

This sequence belongs to the bacterial ribosomal protein bL17 family. As to quaternary structure, part of the 50S ribosomal subunit. Contacts protein L32.

The sequence is that of Large ribosomal subunit protein bL17 from Acinetobacter baylyi (strain ATCC 33305 / BD413 / ADP1).